Here is a 427-residue protein sequence, read N- to C-terminus: Membrane-bound hydrogenase subunit alpha (427 aa).

The Ni(2+) site is built by C68, C71, C374, and C377.

It belongs to the complex I 49 kDa subunit family. The membrane-bound hydrogenase complex is composed of MbhK and MbhL, and may also contain MbhJ. Ni(2+) is required as a cofactor.

The protein localises to the cell membrane. It carries out the reaction H2 + 2 oxidized [2Fe-2S]-[ferredoxin] = 2 reduced [2Fe-2S]-[ferredoxin] + 2 H(+). With respect to regulation, inhibited by 0.1 mM Cu(2+). In terms of biological role, alpha subunit of a hydrogen-evolving hydrogenase that utilizes protons both as a substrate for hydrogen production and proton translocation. Acts by coupling the redox reaction via ferredoxin and iron-sulfur (Fe-S) clusters to proton translocation across the membrane thereby conserving the redox energy in a proton gradient. The sequence is that of Membrane-bound hydrogenase subunit alpha from Pyrococcus furiosus (strain ATCC 43587 / DSM 3638 / JCM 8422 / Vc1).